The chain runs to 228 residues: Cytochrome c oxidase subunit 2 (228 aa).

Over 1–26 (MPNWGQVMFQDAASSVMLQLVSFHDH) the chain is Mitochondrial intermembrane. A helical transmembrane segment spans residues 27–47 (ALLVLTLVLTVVGYALLALML). At 48–60 (NKQVNRYIMEAQT) the chain is on the mitochondrial matrix side. Residues 61 to 81 (VETIWTILPALILLVLALPSL) traverse the membrane as a helical segment. Over 82 to 228 (RILYITDEVS…FMSWVSNFKP (147 aa)) the chain is Mitochondrial intermembrane. Residues H161, C196, E198, C200, H204, and M207 each coordinate Cu cation. A Mg(2+)-binding site is contributed by E198.

This sequence belongs to the cytochrome c oxidase subunit 2 family. Component of the cytochrome c oxidase (complex IV, CIV), a multisubunit enzyme composed of a catalytic core of 3 subunits and several supernumerary subunits. The complex exists as a monomer or a dimer and forms supercomplexes (SCs) in the inner mitochondrial membrane with ubiquinol-cytochrome c oxidoreductase (cytochrome b-c1 complex, complex III, CIII). Cu cation serves as cofactor.

It is found in the mitochondrion inner membrane. The catalysed reaction is 4 Fe(II)-[cytochrome c] + O2 + 8 H(+)(in) = 4 Fe(III)-[cytochrome c] + 2 H2O + 4 H(+)(out). Component of the cytochrome c oxidase, the last enzyme in the mitochondrial electron transport chain which drives oxidative phosphorylation. The respiratory chain contains 3 multisubunit complexes succinate dehydrogenase (complex II, CII), ubiquinol-cytochrome c oxidoreductase (cytochrome b-c1 complex, complex III, CIII) and cytochrome c oxidase (complex IV, CIV), that cooperate to transfer electrons derived from NADH and succinate to molecular oxygen, creating an electrochemical gradient over the inner membrane that drives transmembrane transport and the ATP synthase. Cytochrome c oxidase is the component of the respiratory chain that catalyzes the reduction of oxygen to water. Electrons originating from reduced cytochrome c in the intermembrane space (IMS) are transferred via the dinuclear copper A center (CU(A)) of subunit 2 and heme A of subunit 1 to the active site in subunit 1, a binuclear center (BNC) formed by heme A3 and copper B (CU(B)). The BNC reduces molecular oxygen to 2 water molecules using 4 electrons from cytochrome c in the IMS and 4 protons from the mitochondrial matrix. In Lumbricus terrestris (Common earthworm), this protein is Cytochrome c oxidase subunit 2 (COII).